Reading from the N-terminus, the 470-residue chain is Neuraminidase (470 aa).

Over 1-14 (MNPNQKIITIGSVS) the chain is Intravirion. The involved in apical transport and lipid raft association stretch occupies residues 11–32 (GSVSLGLVVLNILLHIVSITIT). Residues 15-35 (LGLVVLNILLHIVSITITVLV) traverse the membrane as a helical segment. The segment at 32–86 (TVLVLPGNGNNGSCNETVIREYNETVRIEKITQWHNTNVIEYIERPESDHFMNNT) is hypervariable stalk region. Residues 36–470 (LPGNGNNGSC…AILPFDIDKM (435 aa)) are Virion surface-facing. 4 N-linked (GlcNAc...) asparagine; by host glycosylation sites follow: asparagine 42, asparagine 46, asparagine 54, and asparagine 84. The tract at residues 89–470 (LCDAKGFAPF…AILPFDIDKM (382 aa)) is head of neuraminidase. 8 disulfides stabilise this stretch: cysteine 90/cysteine 417, cysteine 122/cysteine 127, cysteine 182/cysteine 229, cysteine 231/cysteine 236, cysteine 277/cysteine 290, cysteine 279/cysteine 288, cysteine 316/cysteine 335, and cysteine 421/cysteine 446. Arginine 116 serves as a coordination point for substrate. The N-linked (GlcNAc...) asparagine; by host glycan is linked to asparagine 144. Residue aspartate 149 is the Proton donor/acceptor of the active site. Arginine 150 is a substrate binding site. 275–276 (EE) is a binding site for substrate. Residue arginine 291 participates in substrate binding. Position 292 (aspartate 292) interacts with Ca(2+). N-linked (GlcNAc...) asparagine; by host glycosylation is present at asparagine 293. Residues glycine 296 and aspartate 322 each contribute to the Ca(2+) site. Arginine 368 serves as a coordination point for substrate. Asparagine 398 is a glycosylation site (N-linked (GlcNAc...) asparagine; by host). Catalysis depends on tyrosine 402, which acts as the Nucleophile.

Belongs to the glycosyl hydrolase 34 family. In terms of assembly, homotetramer. The cofactor is Ca(2+). N-glycosylated.

It localises to the virion membrane. The protein localises to the host apical cell membrane. It catalyses the reaction Hydrolysis of alpha-(2-&gt;3)-, alpha-(2-&gt;6)-, alpha-(2-&gt;8)- glycosidic linkages of terminal sialic acid residues in oligosaccharides, glycoproteins, glycolipids, colominic acid and synthetic substrates.. With respect to regulation, inhibited by the neuraminidase inhibitors zanamivir (Relenza) and oseltamivir (Tamiflu). These drugs interfere with the release of progeny virus from infected cells and are effective against all influenza strains. Resistance to neuraminidase inhibitors is quite rare. Functionally, catalyzes the removal of terminal sialic acid residues from viral and cellular glycoconjugates. Cleaves off the terminal sialic acids on the glycosylated HA during virus budding to facilitate virus release. Additionally helps virus spread through the circulation by further removing sialic acids from the cell surface. These cleavages prevent self-aggregation and ensure the efficient spread of the progeny virus from cell to cell. Otherwise, infection would be limited to one round of replication. Described as a receptor-destroying enzyme because it cleaves a terminal sialic acid from the cellular receptors. May facilitate viral invasion of the upper airways by cleaving the sialic acid moieties on the mucin of the airway epithelial cells. Likely to plays a role in the budding process through its association with lipid rafts during intracellular transport. May additionally display a raft-association independent effect on budding. Plays a role in the determination of host range restriction on replication and virulence. Sialidase activity in late endosome/lysosome traffic seems to enhance virus replication. In Influenza A virus (strain A/Guinea fowl/New York/4-3587/1984 H3N8), this protein is Neuraminidase.